The primary structure comprises 327 residues: Glycerol-3-phosphate dehydrogenase [NAD(P)+] (327 aa).

NADPH is bound by residues Trp11, His30, and Lys103. Sn-glycerol 3-phosphate is bound by residues Lys103, Gly131, and Ser133. Ala135 lines the NADPH pocket. Sn-glycerol 3-phosphate is bound by residues Lys186, Asp243, Ser253, Arg254, and Asn255. Lys186 functions as the Proton acceptor in the catalytic mechanism. Arg254 contacts NADPH. Positions 281 and 283 each coordinate NADPH.

This sequence belongs to the NAD-dependent glycerol-3-phosphate dehydrogenase family.

Its subcellular location is the cytoplasm. The catalysed reaction is sn-glycerol 3-phosphate + NAD(+) = dihydroxyacetone phosphate + NADH + H(+). It catalyses the reaction sn-glycerol 3-phosphate + NADP(+) = dihydroxyacetone phosphate + NADPH + H(+). It participates in membrane lipid metabolism; glycerophospholipid metabolism. Functionally, catalyzes the reduction of the glycolytic intermediate dihydroxyacetone phosphate (DHAP) to sn-glycerol 3-phosphate (G3P), the key precursor for phospholipid synthesis. In Wolbachia pipientis wMel, this protein is Glycerol-3-phosphate dehydrogenase [NAD(P)+].